A 455-amino-acid chain; its full sequence is Probable cytosolic iron-sulfur protein assembly protein 1 (455 aa).

7 WD repeats span residues Gly-31–Ala-70, Gly-90–Ser-129, Gly-163–Cys-202, Glu-208–Cys-247, Gly-253–Ala-292, Tyr-318–Ser-365, and His-380–Thr-453.

The protein belongs to the WD repeat CIA1 family.

Functionally, essential component of the cytosolic iron-sulfur (Fe/S) protein assembly machinery. Required for the maturation of extramitochondrial Fe/S proteins. The sequence is that of Probable cytosolic iron-sulfur protein assembly protein 1 from Mycosarcoma maydis (Corn smut fungus).